Reading from the N-terminus, the 220-residue chain is Nucleolar protein 12 (220 aa).

A coiled-coil region spans residues histidine 31–glutamate 86. The tract at residues isoleucine 109 to asparagine 220 is disordered. Positions glutamate 139–lysine 148 are enriched in basic and acidic residues. 2 stretches are compositionally biased toward basic residues: residues arginine 176 to serine 186 and lysine 205 to asparagine 220.

This sequence belongs to the RRP17 family.

The protein localises to the nucleus. The protein resides in the nucleolus. In terms of biological role, may bind to rRNA. This Xenopus laevis (African clawed frog) protein is Nucleolar protein 12 (nol12).